We begin with the raw amino-acid sequence, 182 residues long: MSYVVAITGGIGSGKTTVADRFQALYNINIVDADIIAREVVNPGTEGLIQIEQHFGPQILLDDGHLNRAKLRECIFSEPSEKQWLNDLLHPLIRSEMQRQIALSTSEYTLLVVPLLVENKLQYLANRVLVVDVLEQTQINRTVNRDKVNHQQVKAILASQASREERLAAADDIINNDHKIMT.

The DPCK domain maps to 4 to 182; that stretch reads VVAITGGIGS…IINNDHKIMT (179 aa). 12–17 is a binding site for ATP; that stretch reads GSGKTT.

Belongs to the CoaE family.

Its subcellular location is the cytoplasm. It catalyses the reaction 3'-dephospho-CoA + ATP = ADP + CoA + H(+). It functions in the pathway cofactor biosynthesis; coenzyme A biosynthesis; CoA from (R)-pantothenate: step 5/5. Functionally, catalyzes the phosphorylation of the 3'-hydroxyl group of dephosphocoenzyme A to form coenzyme A. This is Dephospho-CoA kinase from Aliivibrio fischeri (strain ATCC 700601 / ES114) (Vibrio fischeri).